The primary structure comprises 38 residues: MRRALDGPGSSSLDTRQADKRQVRFRQCYFNPISCFRK.

Positions 1 to 19 are excised as a propeptide; sequence MRRALDGPGSSSLDTRQAD. Gln-22 bears the Pyrrolidone carboxylic acid; partial mark.

Belongs to the allatostatin family. As to expression, in its non-pyroglutamate form, expressed in antennal lobe (AL), corpora cardiaca (CC), corpora allata (CA) and gnathal ganglion (GNG) with expression in AL detected in most animals and expression in CC, CA and GNG detected in few animals (at protein level). In its pyroglutamate form, expressed in antennal lobe (AL), corpora cardiaca (CC) and corpora allata (CA) with expression detected in few animals (at protein level). Not expressed in GNG (protein level).

The protein resides in the secreted. Strongly inhibits juvenile hormone biosynthesis. The sequence is that of Allatostatin-C from Agrotis ipsilon (Black cutworm moth).